The chain runs to 321 residues: Isoaspartyl peptidase (321 aa).

Thr179 functions as the Nucleophile in the catalytic mechanism. Substrate is bound by residues 207–210 and 230–233; these read RVGD and TGTG.

It belongs to the Ntn-hydrolase family. As to quaternary structure, heterotetramer of two alpha and two beta chains arranged as a dimer of alpha/beta heterodimers. Post-translationally, autocleaved. Generates the alpha and beta subunits. The N-terminal residue of the beta subunit is thought to be responsible for the nucleophile hydrolase activity. Both subunits undergo further processing at their C-termini. The overexpressed alpha subunit seems to consist of residues 2-161, with an oxidized Met residue and a tightly coordinated Na(+), whereas the overexpressed beta subunit is processed to residue 315 and has 3 oxidized Met residues. Processing of the alpha subunit is inhibited by Zn(2+).

It catalyses the reaction Cleavage of a beta-linked Asp residue from the N-terminus of a polypeptide.. In terms of biological role, degrades proteins damaged by L-isoaspartyl residue formation (also known as beta-Asp residues). Degrades L-isoaspartyl-containing di- and maybe also tripeptides. Also has L-asparaginase activity, although this may not be its principal function. May be involved in glutathione, and possibly other peptide, transport, although these results could also be due to polar effects of disruption. The polypeptide is Isoaspartyl peptidase (iaaA) (Escherichia coli (strain K12)).